The following is a 287-amino-acid chain: Zinc finger protein SNAI3 (287 aa).

The segment at 1–20 (MPRSFLVKTHSSHRVPNYGK) is SNAG domain. 4 consecutive C2H2-type zinc fingers follow at residues 147–169 (FECIHCHRPYHTLAGLARHQQLH), 178–200 (FTCRYCDKEYASLGALKMHIRTH), 204–226 (CICKVCGKAFSRPWLLQGHIRTH), and 232–254 (YTCSHCSRAFADRSNLRAHLQTH). Residues 260 to 282 (YRCAVCPKAFSRMSLLARHEEAG) form a C2H2-type 5; degenerate zinc finger.

Belongs to the snail C2H2-type zinc-finger protein family. As to expression, highly expressed in skeletal muscle and thymus. Lower expression in heart, lung and spleen.

It is found in the nucleus. In terms of biological role, seems to inhibit myoblast differentiation. Transcriptional repressor of E-box-dependent transactivation of downstream myogenic bHLHs genes. Binds preferentially to the canonical E-box sequences 5'-CAGGTG-3' and 5'-CACCTG-3'. This is Zinc finger protein SNAI3 (Snai3) from Mus musculus (Mouse).